A 686-amino-acid polypeptide reads, in one-letter code: MSKAGKITAAISGAFLLLIVVAIILIATFDWNRLKPTINQKVSAELNRPFAIRGDLGVVWERQKQETGWRSWVPWPHVHAEDIILGNPPDIPEVTMVHLPRVEATLAPLALLTKTVWLPWIKLEKPDARLIRLSEKNNNWTFNLANDDNKDANAKPSAWSFRLDNILFDQGRIAIDDKVSKADLEIFVDPLGKPLPFSEVTGSKGKADKEKVGDYVFGLKAQGRYNGEPLTGTGKIGGMLALRGEGTPFPVQADFRSGNTRVAFDGVVNDPMKMGGVDLRLKFSGDSLGDLYELTGVLLPDTPPFETDGRLVAKIDTEKSSVFDYRGFNGRIGDSDIHGSLVYTTGKPRPKLEGDVESRQLRLADLGPLIGVDSGKGAEKSKRSEQKKGEKSVQPAGKVLPYDRFETDKWDVMDADVRFKGRRIEHGSSLPISDLSTHIILKNADLRLQPLKFGMAGGSIAANIHLEGDKKPMQGRADIQARRLKLKELMPDVELMQKTLGEMNGDAELRGSGNSVAALLGNSNGNLKLLMNDGLVSRNLMEIVGLNVGNYIVGAIFGDDEVRVNCAAANLNIANGVARPQIFAFDTENALINVTGTASFASEQLDLTIDPESKGIRIITLRSPLYVRGTFKNPQAGVKAGPLIARGAVAAALATLVTPAAALLALISPSEGEANQCRTILSQMKK.

The Cytoplasmic segment spans residues 1–6 (MSKAGK). Residues 7 to 27 (ITAAISGAFLLLIVVAIILIA) traverse the membrane as a helical segment. Residues 28–686 (TFDWNRLKPT…CRTILSQMKK (659 aa)) are Periplasmic-facing. Residues 372–396 (VDSGKGAEKSKRSEQKKGEKSVQPA) form a disordered region. Residues 376–391 (KGAEKSKRSEQKKGEK) are compositionally biased toward basic and acidic residues.

Belongs to the AsmA family.

The protein resides in the cell inner membrane. The polypeptide is AsmA family protein YhjG (yhjG) (Escherichia coli (strain K12)).